The following is a 204-amino-acid chain: Large ribosomal subunit protein uL22m (204 aa).

The transit peptide at 1-27 (MAASITASVWGTLLKIHRGLTASGCLP) directs the protein to the mitochondrion.

The protein belongs to the universal ribosomal protein uL22 family. As to quaternary structure, component of the mitochondrial ribosome large subunit (39S) which comprises a 16S rRNA and about 50 distinct proteins.

Its subcellular location is the mitochondrion. This Xenopus tropicalis (Western clawed frog) protein is Large ribosomal subunit protein uL22m (mrpl22).